Reading from the N-terminus, the 356-residue chain is HORMA domain-containing protein 1 (356 aa).

An HORMA domain is found at 24–225 (QQSLVLVKKL…TPFHSIKMNV (202 aa)). Disordered regions lie at residues 282–305 (ETQE…PKMD) and 333–356 (QLEF…SVPK). Basic and acidic residues predominate over residues 288–298 (EQPHRHTKEDF). The span at 347–356 (PKRRKVSVPK) shows a compositional bias: basic residues.

It localises to the nucleus. Its subcellular location is the chromosome. Functionally, plays a key role in meiotic progression by ensuring that sufficient numbers of processed DNA double-strand breaks (DSBs) are available for successful homology search, promoting synaptonemal-complex formation independently and playing key role in the male mid-pachytene checkpoint and the female meiotic prophase checkpoint. This Danio rerio (Zebrafish) protein is HORMA domain-containing protein 1 (hormad1).